A 385-amino-acid polypeptide reads, in one-letter code: T-box transcription factor TBX10 (385 aa).

Positions 69–252 (LEMKPLWEEF…SNPFAKGFRE (184 aa)) form a DNA-binding region, T-box. Disordered stretches follow at residues 283–310 (GSAE…NQLL) and 328–359 (QNLY…AGDQ). The segment covering 293–307 (KASASSSRTPTQPHN) has biased composition (polar residues). Over residues 331-347 (YPGSPSRAGPPRARLAP) the composition is skewed to low complexity.

The protein localises to the nucleus. Functionally, probable transcriptional regulator involved in developmental processes. This Mus musculus (Mouse) protein is T-box transcription factor TBX10 (Tbx10).